A 1309-amino-acid polypeptide reads, in one-letter code: Nuclear pore complex protein NUP1 (1309 aa).

9 disordered regions span residues 1-58 (MASA…GGGW), 83-118 (RKRL…HKED), 173-210 (AADS…GSMN), 266-296 (RTPF…VTPR), 329-348 (SKWE…SGLK), 384-417 (ESPL…NLVP), 467-538 (LGNL…EEHP), 594-617 (SEAM…NGSL), and 635-680 (SNMA…VFPN). The tract at residues 2–677 (ASAARGESSN…LEEPKKPAAV (676 aa)) is 25 X 2 AA repeats of F-G. Over residues 22 to 32 (KFRKPTARRSQ) the composition is skewed to basic residues. Gly residues predominate over residues 47 to 58 (GLGGGDVRGGGW). Polar residues predominate over residues 91-101 (TPLQSPEQQKQ). Over residues 195–204 (PSHERDRTHP) the composition is skewed to basic and acidic residues. The segment covering 268–283 (PFPQKSPTMSLVTKPS) has biased composition (polar residues). Residues 396 to 405 (KTTHTSKDSA) are compositionally biased toward basic and acidic residues. Polar residues-rich tracts occupy residues 597 to 617 (MPST…NGSL) and 635 to 659 (SNMA…SGKP). The segment covering 660-673 (TSEEKRIPLEEPKK) has biased composition (basic and acidic residues). Copy 1 of the repeat occupies 711–712 (FG). Residues 719 to 865 (KPTESKKTFS…VKNATFGNTS (147 aa)) are disordered. 2 stretches are compositionally biased toward low complexity: residues 728–741 (SNSA…TSAA) and 767–783 (SSPS…SDNS). Residues 789–803 (STVQSFAATHNSSSI) show a composition bias toward polar residues. Residues 804-805 (FG) form repeat 2. Over residues 809 to 827 (TSNDSNSQSTSASPLSSTS) the composition is skewed to low complexity. A run of 12 repeats spans residues 831–832 (FG), 861–862 (FG), 869–870 (FG), 883–884 (FG), 898–899 (FG), 927–928 (FG), 956–957 (FG), 983–984 (FG), 1004–1005 (FG), 1029–1030 (FG), 1038–1039 (FG), and 1053–1054 (FG). The span at 1004-1023 (FGAGNAQTGNTGSGTTTSTQ) shows a compositional bias: low complexity. The disordered stretch occupies residues 1004 to 1028 (FGAGNAQTGNTGSGTTTSTQSIPFQ). Residues 1068 to 1086 (TPQLSSTNSSASSSSTMSS) show a composition bias toward low complexity. A disordered region spans residues 1068–1105 (TPQLSSTNSSASSSSTMSSPLFGTSWQAPNSSPNSGPV). The stretch at 1089–1090 (FG) is repeat 15. A compositionally biased stretch (low complexity) spans 1096-1105 (PNSSPNSGPV). Repeat copies occupy residues 1121–1122 (FG), 1137–1138 (FG), 1151–1152 (FG), 1153–1154 (FG), 1166–1167 (FG), 1177–1178 (FG), 1186–1187 (FG), 1224–1225 (FG), 1238–1239 (FG), and 1255–1256 (FG). Residues 1278–1309 (FQGGGSFSLGSTGGGDKSGRRIFKAKKSTRKK) form a disordered region. Over residues 1279 to 1293 (QGGGSFSLGSTGGGD) the composition is skewed to gly residues. Residues 1297 to 1309 (RRIFKAKKSTRKK) are compositionally biased toward basic residues.

In terms of assembly, part of the nuclear pore complex (NPC). The NPC has an eight-fold symmetrical structure comprising a central transport channel and two rings, the cytoplasmic and nuclear rings, to which eight filaments are attached. The cytoplasmic filaments have loose ends, while the nuclear filaments are joined in a distal ring, forming a nuclear basket. NPCs are highly dynamic in configuration and composition, and can be devided in 3 subcomplexes, the NUP62 subcomplex, the NUP107-160 subcomplex and the NUP93 subcomplex, containing approximately 30 different nucleoporin proteins. Interacts with EER5, anchoring the TREX-2 complex on the nuclear pore complex. Interacts with UCH1 and UCH2.

The protein resides in the nucleus envelope. It localises to the nucleus. The protein localises to the nuclear pore complex. It is found in the cytoplasm. Its subcellular location is the cytosol. Its function is as follows. Nucleoporin required for nuclear mRNA export. Functions as an adapter and/or regulator molecule in the periphery of the nuclear pore complex (NPC). May interact with importin proteins and mediate active nucleocytoplasmic transport through the NPC. Involved in regulation of nuclear morphology. In Arabidopsis thaliana (Mouse-ear cress), this protein is Nuclear pore complex protein NUP1.